A 152-amino-acid polypeptide reads, in one-letter code: 3-hydroxyacyl-[acyl-carrier-protein] dehydratase FabZ (152 aa).

Residue histidine 58 is part of the active site.

The protein belongs to the thioester dehydratase family. FabZ subfamily.

It is found in the cytoplasm. The catalysed reaction is a (3R)-hydroxyacyl-[ACP] = a (2E)-enoyl-[ACP] + H2O. Involved in unsaturated fatty acids biosynthesis. Catalyzes the dehydration of short chain beta-hydroxyacyl-ACPs and long chain saturated and unsaturated beta-hydroxyacyl-ACPs. This is 3-hydroxyacyl-[acyl-carrier-protein] dehydratase FabZ from Prochlorococcus marinus subsp. pastoris (strain CCMP1986 / NIES-2087 / MED4).